Reading from the N-terminus, the 264-residue chain is Thiazole synthase (264 aa).

Lys-106 serves as the catalytic Schiff-base intermediate with DXP. 1-deoxy-D-xylulose 5-phosphate contacts are provided by residues Gly-167, 193 to 194 (AG), and 215 to 216 (NS).

Belongs to the ThiG family. Homotetramer. Forms heterodimers with either ThiH or ThiS.

It localises to the cytoplasm. It carries out the reaction [ThiS sulfur-carrier protein]-C-terminal-Gly-aminoethanethioate + 2-iminoacetate + 1-deoxy-D-xylulose 5-phosphate = [ThiS sulfur-carrier protein]-C-terminal Gly-Gly + 2-[(2R,5Z)-2-carboxy-4-methylthiazol-5(2H)-ylidene]ethyl phosphate + 2 H2O + H(+). It participates in cofactor biosynthesis; thiamine diphosphate biosynthesis. In terms of biological role, catalyzes the rearrangement of 1-deoxy-D-xylulose 5-phosphate (DXP) to produce the thiazole phosphate moiety of thiamine. Sulfur is provided by the thiocarboxylate moiety of the carrier protein ThiS. In vitro, sulfur can be provided by H(2)S. The protein is Thiazole synthase of Pseudomonas fluorescens (strain Pf0-1).